Consider the following 436-residue polypeptide: GTPase Der (436 aa).

EngA-type G domains lie at 4–167 and 176–351; these read PVVA…PKEE and VKFS…DNHS. GTP-binding positions include 10-17, 57-61, 119-122, 182-189, 229-233, and 294-297; these read GRPNVGKS, DTGGI, NKVD, DTAGM, and NKWD. One can recognise a KH-like domain in the interval 352–436; that stretch reads LRVQSSMLND…PIRVIARKRK (85 aa).

This sequence belongs to the TRAFAC class TrmE-Era-EngA-EngB-Septin-like GTPase superfamily. EngA (Der) GTPase family. As to quaternary structure, associates with the 50S ribosomal subunit.

GTPase that plays an essential role in the late steps of ribosome biogenesis. In Listeria welshimeri serovar 6b (strain ATCC 35897 / DSM 20650 / CCUG 15529 / CIP 8149 / NCTC 11857 / SLCC 5334 / V8), this protein is GTPase Der.